The primary structure comprises 536 residues: Membrane protein insertase YidC (536 aa).

A helical transmembrane segment spans residues 14 to 34 (ILIATAISLLFFIPYSYFFAP). Positions 43–69 (STSMERAEQQAAPQTSSSPKEGQVSSV) are disordered. A compositionally biased stretch (polar residues) spans 53 to 68 (AAPQTSSSPKEGQVSS). A run of 5 helical transmembrane segments spans residues 312 to 332 (VVEY…LDWL), 339 to 359 (WGWA…PLTY), 401 to 421 (GANP…FFAI), 436 to 456 (WILW…PILM), and 484 to 504 (PLIF…YWFV).

This sequence belongs to the OXA1/ALB3/YidC family. Type 1 subfamily. In terms of assembly, interacts with the Sec translocase complex via SecD. Specifically interacts with transmembrane segments of nascent integral membrane proteins during membrane integration.

The protein localises to the cell inner membrane. Its function is as follows. Required for the insertion and/or proper folding and/or complex formation of integral membrane proteins into the membrane. Involved in integration of membrane proteins that insert both dependently and independently of the Sec translocase complex, as well as at least some lipoproteins. Aids folding of multispanning membrane proteins. The chain is Membrane protein insertase YidC from Wolinella succinogenes (strain ATCC 29543 / DSM 1740 / CCUG 13145 / JCM 31913 / LMG 7466 / NCTC 11488 / FDC 602W) (Vibrio succinogenes).